A 128-amino-acid chain; its full sequence is Large ribosomal subunit protein bL20 (128 aa).

Belongs to the bacterial ribosomal protein bL20 family.

Its function is as follows. Binds directly to 23S ribosomal RNA and is necessary for the in vitro assembly process of the 50S ribosomal subunit. It is not involved in the protein synthesizing functions of that subunit. The protein is Large ribosomal subunit protein bL20 of Kocuria rhizophila (strain ATCC 9341 / DSM 348 / NBRC 103217 / DC2201).